The primary structure comprises 128 residues: Small ribosomal subunit protein eS8 (128 aa).

The segment at 1-37 is disordered; the sequence is MGYFQGNDFRKITGGKKGKHRDKRKFELGSPPTETKL. Positions 13–23 are enriched in basic residues; the sequence is TGGKKGKHRDK.

It belongs to the eukaryotic ribosomal protein eS8 family. In terms of assembly, part of the 30S ribosomal subunit.

The polypeptide is Small ribosomal subunit protein eS8 (Sulfurisphaera tokodaii (strain DSM 16993 / JCM 10545 / NBRC 100140 / 7) (Sulfolobus tokodaii)).